The primary structure comprises 301 residues: Large ribosomal subunit protein uL18 (301 aa).

The protein belongs to the universal ribosomal protein uL18 family. Component of the large ribosomal subunit (LSU). Mature N.crassa ribosomes consist of a small (40S) and a large (60S) subunit. The 40S small subunit contains 1 molecule of ribosomal RNA (18S rRNA) and at least 32 different proteins. The large 60S subunit contains 3 rRNA molecules (26S, 5.8S and 5S rRNA) and at least 42 different proteins.

The protein resides in the cytoplasm. Functionally, component of the ribosome, a large ribonucleoprotein complex responsible for the synthesis of proteins in the cell. The small ribosomal subunit (SSU) binds messenger RNAs (mRNAs) and translates the encoded message by selecting cognate aminoacyl-transfer RNA (tRNA) molecules. The large subunit (LSU) contains the ribosomal catalytic site termed the peptidyl transferase center (PTC), which catalyzes the formation of peptide bonds, thereby polymerizing the amino acids delivered by tRNAs into a polypeptide chain. The nascent polypeptides leave the ribosome through a tunnel in the LSU and interact with protein factors that function in enzymatic processing, targeting, and the membrane insertion of nascent chains at the exit of the ribosomal tunnel. The protein is Large ribosomal subunit protein uL18 (rpl-5) of Neurospora crassa (strain ATCC 24698 / 74-OR23-1A / CBS 708.71 / DSM 1257 / FGSC 987).